Here is a 147-residue protein sequence, read N- to C-terminus: Gastrula-specific protein 17 (147 aa).

The segment at 1 to 119 is disordered; that stretch reads MSQNLDFLAL…TQVYGNHQPG (119 aa). 3 stretches are compositionally biased toward polar residues: residues 20–36, 45–57, and 74–88; these read SPTS…STPP, RQIS…YTNP, and LLQN…SPTA.

The chain is Gastrula-specific protein 17 (gs17) from Xenopus laevis (African clawed frog).